Reading from the N-terminus, the 515-residue chain is Cytoplasmic dynein 1 light intermediate chain 1 (515 aa).

Low complexity predominate over residues 1–24 (MAAVGRAGSFGSSSASGAANNASA). A disordered region spans residues 1-34 (MAAVGRAGSFGSSSASGAANNASAELRAGGEEDD). 64–71 (GEDGAGKT) provides a ligand contact to ATP. Disordered regions lie at residues 370–424 (QSQL…DPNM) and 445–515 (KTGS…GEAS). Over residues 397-409 (RTPNRSVTSNVAS) the composition is skewed to polar residues. A compositionally biased stretch (gly residues) spans 448 to 468 (SPGGPGGVGGSPGGGSAGGTG). Residues 490–499 (ELDRISRKPE) are compositionally biased toward basic and acidic residues. A compositionally biased stretch (polar residues) spans 502–515 (SPTSPTSPTEGEAS).

It belongs to the dynein light intermediate chain family. As to quaternary structure, homodimer. The cytoplasmic dynein 1 complex consists of two catalytic heavy chains (HCs) and a number of non-catalytic subunits presented by intermediate chains (ICs). In terms of processing, phosphorylated.

Its subcellular location is the cytoplasm. The protein resides in the cytoskeleton. The protein localises to the chromosome. It localises to the centromere. It is found in the kinetochore. Its subcellular location is the spindle pole. The protein resides in the recycling endosome membrane. In terms of biological role, acts as one of several non-catalytic accessory components of the cytoplasmic dynein 1 complex that are thought to be involved in linking dynein to cargos and to adapter proteins that regulate dynein function. Cytoplasmic dynein 1 acts as a motor for the intracellular retrograde motility of vesicles and organelles along microtubules. May play a role in binding dynein to membranous organelles or chromosomes. May regulate the movement of peripheral sorting endosomes along microtubule tracks toward the microtubule organizing center/centrosome, generating the endosomal recycling compartment. The sequence is that of Cytoplasmic dynein 1 light intermediate chain 1 (DYNC1LI1) from Gallus gallus (Chicken).